We begin with the raw amino-acid sequence, 717 residues long: DNA ligase (717 aa).

Residues aspartate 44 to aspartate 48, serine 93 to leucine 94, and glutamate 127 each bind NAD(+). Lysine 129 acts as the N6-AMP-lysine intermediate in catalysis. NAD(+) is bound by residues arginine 150, glutamate 186, lysine 302, and lysine 326. The Zn(2+) site is built by cysteine 431, cysteine 434, cysteine 455, and cysteine 461. A BRCT domain is found at serine 639 to glycine 717.

The protein belongs to the NAD-dependent DNA ligase family. LigA subfamily. Mg(2+) serves as cofactor. Requires Mn(2+) as cofactor.

It catalyses the reaction NAD(+) + (deoxyribonucleotide)n-3'-hydroxyl + 5'-phospho-(deoxyribonucleotide)m = (deoxyribonucleotide)n+m + AMP + beta-nicotinamide D-nucleotide.. In terms of biological role, DNA ligase that catalyzes the formation of phosphodiester linkages between 5'-phosphoryl and 3'-hydroxyl groups in double-stranded DNA using NAD as a coenzyme and as the energy source for the reaction. It is essential for DNA replication and repair of damaged DNA. In Sinorhizobium fredii (strain NBRC 101917 / NGR234), this protein is DNA ligase.